A 328-amino-acid chain; its full sequence is Fructose-1,6-bisphosphatase class 1 (328 aa).

Residues E89, D110, L112, and D113 each coordinate Mg(2+). Substrate is bound by residues N206, Y234, Y252 to Y254, and K264. Position 270 (E270) interacts with Mg(2+).

The protein belongs to the FBPase class 1 family. As to quaternary structure, homotetramer. Mg(2+) is required as a cofactor.

The protein localises to the cytoplasm. The enzyme catalyses beta-D-fructose 1,6-bisphosphate + H2O = beta-D-fructose 6-phosphate + phosphate. It functions in the pathway carbohydrate biosynthesis; gluconeogenesis. The sequence is that of Fructose-1,6-bisphosphatase class 1 from Wigglesworthia glossinidia brevipalpis.